Here is a 301-residue protein sequence, read N- to C-terminus: Probable splicing factor ECU05_1440 (301 aa).

Residues 1-70 (MQIFIGKIPN…APISVERANG (70 aa)) form the RRM 1 domain. 2 disordered regions span residues 106-140 (PPMR…SFRM) and 255-301 (SKDE…AEND). Composition is skewed to basic and acidic residues over residues 110–140 (YESR…SFRM) and 255–270 (SKDE…HMRS). An RRM 2 domain is found at 182-255 (LKVVFENIAP…HILKTRSYLS (74 aa)).

This sequence belongs to the splicing factor SR family.

Its subcellular location is the nucleus. Its function is as follows. Plays a role in splicing. This chain is Probable splicing factor ECU05_1440, found in Encephalitozoon cuniculi (strain GB-M1) (Microsporidian parasite).